The chain runs to 252 residues: N-acetylglucosaminyl-phosphatidylinositol de-N-acetylase (252 aa).

Residues 2–22 form a helical membrane-spanning segment; sequence ELVGFLCVAVAVLTWGFLRVW. Residues 23–252 lie on the Cytoplasmic side of the membrane; it reads NSAERMRSPE…YMRINSLRFL (230 aa).

This sequence belongs to the PIGL family.

The protein resides in the endoplasmic reticulum membrane. It carries out the reaction a 6-(N-acetyl-alpha-D-glucosaminyl)-1-(1,2-diacyl-sn-glycero-3-phospho)-1D-myo-inositol + H2O = a 6-(alpha-D-glucosaminyl)-1-(1,2-diacyl-sn-glycero-3-phospho)-1D-myo-inositol + acetate. It functions in the pathway glycolipid biosynthesis; glycosylphosphatidylinositol-anchor biosynthesis. Catalyzes the second step of glycosylphosphatidylinositol (GPI) biosynthesis, which is the de-N-acetylation of N-acetylglucosaminyl-phosphatidylinositol. This is N-acetylglucosaminyl-phosphatidylinositol de-N-acetylase (Pigl) from Mus musculus (Mouse).